The following is a 474-amino-acid chain: Glutamate--tRNA ligase (474 aa).

The short motif at 18–28 is the 'HIGH' region element; it reads PSPTGFLHIGG. The 'KMSKS' region signature appears at 244–248; it reads KLSKR. Lys-247 contributes to the ATP binding site.

This sequence belongs to the class-I aminoacyl-tRNA synthetase family. Glutamate--tRNA ligase type 1 subfamily. As to quaternary structure, monomer.

It is found in the cytoplasm. The enzyme catalyses tRNA(Glu) + L-glutamate + ATP = L-glutamyl-tRNA(Glu) + AMP + diphosphate. Its function is as follows. Catalyzes the attachment of glutamate to tRNA(Glu) in a two-step reaction: glutamate is first activated by ATP to form Glu-AMP and then transferred to the acceptor end of tRNA(Glu). This chain is Glutamate--tRNA ligase, found in Caulobacter sp. (strain K31).